The following is a 208-amino-acid chain: dTTP/UTP pyrophosphatase (208 aa).

The disordered stretch occupies residues 28 to 48; that stretch reads DRIHPADIDETPQRAEHPRSL. Catalysis depends on Asp79, which acts as the Proton acceptor.

Belongs to the Maf family. YhdE subfamily. A divalent metal cation is required as a cofactor.

The protein localises to the cytoplasm. The catalysed reaction is dTTP + H2O = dTMP + diphosphate + H(+). It catalyses the reaction UTP + H2O = UMP + diphosphate + H(+). Functionally, nucleoside triphosphate pyrophosphatase that hydrolyzes dTTP and UTP. May have a dual role in cell division arrest and in preventing the incorporation of modified nucleotides into cellular nucleic acids. The polypeptide is dTTP/UTP pyrophosphatase (Brucella abortus (strain 2308)).